Consider the following 237-residue polypeptide: NADPH-dependent FMN reductase ArsH (237 aa).

FMN contacts are provided by residues 39 to 46 and 102 to 107; these read SNRECSYS and SPERHG.

Belongs to the ArsH family. As to quaternary structure, homotetramer. Requires FMN as cofactor.

Functionally, has NADPH-dependent FMN reductase activity and high NADPH-dependent ferric reductase activity with highest activity for Fe(3+) as substrate. No activity with NADH, iron trichloride, Cu(2+) or Ag(+). May be involved in cytosolic ferric iron assimilation as an NADPH-dependent ferric reductase in vivo. This is NADPH-dependent FMN reductase ArsH from Acidithiobacillus ferrooxidans (strain ATCC 23270 / DSM 14882 / CIP 104768 / NCIMB 8455) (Ferrobacillus ferrooxidans (strain ATCC 23270)).